Consider the following 946-residue polypeptide: Bifunctional glutamine synthetase adenylyltransferase/adenylyl-removing enzyme (946 aa).

The segment at 1–440 (MKPLSSPLQQ…VFNELIGDDE (440 aa)) is adenylyl removase. An adenylyl transferase region spans residues 449-946 (SEQWRELWQD…ASWQKWLVEE (498 aa)).

Belongs to the GlnE family. Requires Mg(2+) as cofactor.

The catalysed reaction is [glutamine synthetase]-O(4)-(5'-adenylyl)-L-tyrosine + phosphate = [glutamine synthetase]-L-tyrosine + ADP. The enzyme catalyses [glutamine synthetase]-L-tyrosine + ATP = [glutamine synthetase]-O(4)-(5'-adenylyl)-L-tyrosine + diphosphate. Involved in the regulation of glutamine synthetase GlnA, a key enzyme in the process to assimilate ammonia. When cellular nitrogen levels are high, the C-terminal adenylyl transferase (AT) inactivates GlnA by covalent transfer of an adenylyl group from ATP to specific tyrosine residue of GlnA, thus reducing its activity. Conversely, when nitrogen levels are low, the N-terminal adenylyl removase (AR) activates GlnA by removing the adenylyl group by phosphorolysis, increasing its activity. The regulatory region of GlnE binds the signal transduction protein PII (GlnB) which indicates the nitrogen status of the cell. The chain is Bifunctional glutamine synthetase adenylyltransferase/adenylyl-removing enzyme from Escherichia coli O7:K1 (strain IAI39 / ExPEC).